The primary structure comprises 127 residues: Glycine cleavage system H protein (127 aa).

The region spanning 23 to 105 (KVSVGITDFA…YGEGWIAVIE (83 aa)) is the Lipoyl-binding domain. Residue K64 is modified to N6-lipoyllysine.

This sequence belongs to the GcvH family. As to quaternary structure, the glycine cleavage system is composed of four proteins: P, T, L and H. It depends on (R)-lipoate as a cofactor.

In terms of biological role, the glycine cleavage system catalyzes the degradation of glycine. The H protein shuttles the methylamine group of glycine from the P protein to the T protein. The protein is Glycine cleavage system H protein of Coprothermobacter proteolyticus (strain ATCC 35245 / DSM 5265 / OCM 4 / BT).